The following is a 329-amino-acid chain: DNA-directed RNA polymerase subunit alpha (329 aa).

Residues 1–232 (MQEMLEQLLT…YQLIAFVDLK (232 aa)) are alpha N-terminal domain (alpha-NTD). The alpha C-terminal domain (alpha-CTD) stretch occupies residues 246 to 329 (FDPIFLQPVD…PSSLVSKESA (84 aa)).

Belongs to the RNA polymerase alpha chain family. Homodimer. The RNAP catalytic core consists of 2 alpha, 1 beta, 1 beta' and 1 omega subunit. When a sigma factor is associated with the core the holoenzyme is formed, which can initiate transcription.

It catalyses the reaction RNA(n) + a ribonucleoside 5'-triphosphate = RNA(n+1) + diphosphate. DNA-dependent RNA polymerase catalyzes the transcription of DNA into RNA using the four ribonucleoside triphosphates as substrates. This is DNA-directed RNA polymerase subunit alpha from Hydrogenovibrio crunogenus (strain DSM 25203 / XCL-2) (Thiomicrospira crunogena).